A 1046-amino-acid chain; its full sequence is Translation initiation factor IF-2 (1046 aa).

Residues 49–450 (ALQQGNGGKA…GVMLPRGNGQ (402 aa)) are disordered. Composition is skewed to low complexity over residues 57-80 (KAAP…ARPA) and 89-106 (PAAA…AAPA). Residues 107–128 (APGPRPGPKPAPRPAPAAPAPA) show a composition bias toward pro residues. Over residues 129–169 (APEFTAPPSAPAAPAAAASGPRPGARPGAPKPGGARPATPG) the composition is skewed to low complexity. Residues 177–194 (RGERTDRGDRGDRGDRQG) show a composition bias toward basic and acidic residues. Over residues 195-214 (AARPGGQAPRPGARPAGPRP) the composition is skewed to low complexity. 2 stretches are compositionally biased toward gly residues: residues 239-248 (PRPGGAGAPG) and 266-280 (GGPG…GPGG). Low complexity predominate over residues 302-318 (GNRPNPGMMPQRPAAGP). Gly residues predominate over residues 319 to 414 (RPGGGGPGGR…GTQGAFGRPG (96 aa)). The segment covering 418–427 (RRGRKSKRQR) has biased composition (basic residues). Residues 539-711 (ARPPVVTVMG…VVLTADASLD (173 aa)) form the tr-type G domain. A G1 region spans residues 548-555 (GHVDHGKT). 548 to 555 (GHVDHGKT) contributes to the GTP binding site. The segment at 573-577 (GITQH) is G2. Positions 598-601 (DTPG) are G3. Residues 598–602 (DTPGH) and 652–655 (NKID) contribute to the GTP site. Residues 652 to 655 (NKID) form a G4 region. The G5 stretch occupies residues 688 to 690 (SAK).

Belongs to the TRAFAC class translation factor GTPase superfamily. Classic translation factor GTPase family. IF-2 subfamily.

It localises to the cytoplasm. Functionally, one of the essential components for the initiation of protein synthesis. Protects formylmethionyl-tRNA from spontaneous hydrolysis and promotes its binding to the 30S ribosomal subunits. Also involved in the hydrolysis of GTP during the formation of the 70S ribosomal complex. The protein is Translation initiation factor IF-2 of Streptomyces avermitilis (strain ATCC 31267 / DSM 46492 / JCM 5070 / NBRC 14893 / NCIMB 12804 / NRRL 8165 / MA-4680).